The chain runs to 74 residues: Small ribosomal subunit protein eS28 (74 aa).

This sequence belongs to the eukaryotic ribosomal protein eS28 family.

This chain is Small ribosomal subunit protein eS28, found in Halorubrum lacusprofundi (strain ATCC 49239 / DSM 5036 / JCM 8891 / ACAM 34).